The sequence spans 425 residues: MNLYNIKHPEEQVTFSQAVRQGLGRDQGLFFPEVIPQLNNINELLELPLVERSQKILGALIDGELPQATLDAMVKNAFTFPAPLEKVEENIYALELFHGPTLAFKDFGGRFMAQALAAVRGDGKITILTATSGDTGAAVAHAFYGLENINVVILYPKGKISPLQEKLFCTLGGNIRTVAINADFDACQALVKQAFDDVELRQAIGLNSANSINISRLLAQVCYYFEAVAQLPKEKRDNVVVSVPSGNFGNLTAGLIAKTLGLPIKRFVASTNANDTVPRYLKSGNWDPKTTVATLSNAMDVSRPNNWPRVEELFKRNGWDLTDLGSGMLSDSETEDTLKAMQSKGYLCEPHGAIAYQVLKDQLKASETGIFLCTAHPAKFKESVERILGIQLPLPETLDKHNQLPLLSDEMDNDFAQLRAYLLKS.

N6-(pyridoxal phosphate)lysine is present on lysine 105.

It belongs to the threonine synthase family. Pyridoxal 5'-phosphate is required as a cofactor.

The catalysed reaction is O-phospho-L-homoserine + H2O = L-threonine + phosphate. The protein operates within amino-acid biosynthesis; L-threonine biosynthesis; L-threonine from L-aspartate: step 5/5. Functionally, catalyzes the gamma-elimination of phosphate from L-phosphohomoserine and the beta-addition of water to produce L-threonine. This Haemophilus influenzae (strain ATCC 51907 / DSM 11121 / KW20 / Rd) protein is Threonine synthase (thrC).